The primary structure comprises 320 residues: Phosphate acyltransferase (320 aa).

This sequence belongs to the PlsX family. As to quaternary structure, homodimer. Probably interacts with PlsY.

Its subcellular location is the cytoplasm. It carries out the reaction a fatty acyl-[ACP] + phosphate = an acyl phosphate + holo-[ACP]. It participates in lipid metabolism; phospholipid metabolism. Its function is as follows. Catalyzes the reversible formation of acyl-phosphate (acyl-PO(4)) from acyl-[acyl-carrier-protein] (acyl-ACP). This enzyme utilizes acyl-ACP as fatty acyl donor, but not acyl-CoA. This chain is Phosphate acyltransferase, found in Chlamydia pneumoniae (Chlamydophila pneumoniae).